Consider the following 384-residue polypeptide: Brix domain-containing protein F44G4.1 (384 aa).

Disordered stretches follow at residues 1–58 and 82–135; these read MAPK…KVVK and SKAT…PQKE. Residues 18–48 show a composition bias toward acidic residues; that stretch reads FVEEEVTGDVDEDGFEQAEDMPDEVDSDEDE. Residues 96 to 114 show a composition bias toward basic residues; the sequence is LPKSQRGKALKRALRKDKR. Basic and acidic residues predominate over residues 115–127; sequence ARQGERAQIRDEL. The Brix domain occupies 177-360; sequence PKVMITMTPK…LKWLQKGTFD (184 aa).

The polypeptide is Brix domain-containing protein F44G4.1 (Caenorhabditis elegans).